A 193-amino-acid chain; its full sequence is Hypoxanthine/guanine phosphoribosyltransferase (193 aa).

This sequence belongs to the purine/pyrimidine phosphoribosyltransferase family. Archaeal HPRT subfamily. As to quaternary structure, homodimer.

Its subcellular location is the cytoplasm. The enzyme catalyses IMP + diphosphate = hypoxanthine + 5-phospho-alpha-D-ribose 1-diphosphate. It catalyses the reaction GMP + diphosphate = guanine + 5-phospho-alpha-D-ribose 1-diphosphate. It participates in purine metabolism; IMP biosynthesis via salvage pathway; IMP from hypoxanthine: step 1/1. Catalyzes a salvage reaction resulting in the formation of IMP that is energically less costly than de novo synthesis. The polypeptide is Hypoxanthine/guanine phosphoribosyltransferase (Methanothermobacter thermautotrophicus (strain ATCC 29096 / DSM 1053 / JCM 10044 / NBRC 100330 / Delta H) (Methanobacterium thermoautotrophicum)).